The following is a 144-amino-acid chain: MNPSRCRILAVGKVRRDWIQKGIELYLKRLPGLTVTELRDSSPEKEADSIRAALRPDETLIALMEQGECLGSIPFARRLKQFENERLVFVIGGADGLTAELKLQAQWQLSLSPLTFPHELARLMLVEQLFRAQSIVQGRPYHRA.

S-adenosyl-L-methionine is bound by residues leucine 63, glycine 92, and 111–116 (LSPLTF).

This sequence belongs to the RNA methyltransferase RlmH family. As to quaternary structure, homodimer.

The protein resides in the cytoplasm. The enzyme catalyses pseudouridine(1915) in 23S rRNA + S-adenosyl-L-methionine = N(3)-methylpseudouridine(1915) in 23S rRNA + S-adenosyl-L-homocysteine + H(+). Specifically methylates the pseudouridine at position 1915 (m3Psi1915) in 23S rRNA. This is Ribosomal RNA large subunit methyltransferase H from Synechococcus sp. (strain CC9902).